The chain runs to 344 residues: Methionine import ATP-binding protein MetN (344 aa).

The ABC transporter domain maps to Leu2–Val241. Residue Gly38 to Ser45 coordinates ATP.

This sequence belongs to the ABC transporter superfamily. Methionine importer (TC 3.A.1.24) family. In terms of assembly, the complex is composed of two ATP-binding proteins (MetN), two transmembrane proteins (MetI) and a solute-binding protein (MetQ).

The protein localises to the cell membrane. It catalyses the reaction L-methionine(out) + ATP + H2O = L-methionine(in) + ADP + phosphate + H(+). The catalysed reaction is D-methionine(out) + ATP + H2O = D-methionine(in) + ADP + phosphate + H(+). In terms of biological role, part of the ABC transporter complex MetNIQ involved in methionine import. Responsible for energy coupling to the transport system. The protein is Methionine import ATP-binding protein MetN of Latilactobacillus sakei subsp. sakei (strain 23K) (Lactobacillus sakei subsp. sakei).